Consider the following 732-residue polypeptide: MKVQEGLFVVAVFYLAYTQLVKGQPRKECQTRCGNVAVEYPFGTSPGCYYPGDESFNLTCNEQEKLFFGNMPVINMSLSGQLRVRLVRSRVCYDSQGKQTDYIAQRTTLGNFTLSELNRFTVVGCNSYAFLRTSGVEKYSTGCISICDSATTKNGSCSGEGCCQIPVPRGYSFVRVKPHSFHNHPTVHLFNPCTYAFLVEDGMFDFHALEDLNNLRNVTTFPVVLDWSIGDKTCKQVEYRGVCGGNSTCFDSTGGTGYNCKCLEGFEGNPYLPNGCQDINECISSRHNCSEHSTCENTKGSFNCNCPSGYRKDSLNSCTRKVRPEYFRWTQIFLGTTIGFSVIMLGISCLQQKIKHRKNTELRQKFFEQNGGGMLIQRVSGAGPSNVDVKIFTEKGMKEATNGYHESRILGQGGQGTVYKGILPDNSIVAIKKARLGNRSQVEQFINEVLVLSQINHRNVVKVLGCCLETEVPLLVYEFINSGTLFDHLHGSLYDSSLTWEHRLRIATEVAGSLAYLHSSASIPIIHRDIKTANILLDKNLTAKVADFGASRLIPMDKEQLTTIVQGTLGYLDPEYYNTGLLNEKSDVYSFGVVLMELLSGQKALCFERPHCPKNLVSCFASATKNNRFHEIIDGQVMNEDNQREIQEAARIAAECTRLMGEERPRMKEVAAELEALRVKTTKYKWSDQYRETGEIEHLLGVQILSAQGETSSSIGYDSIRNVTTLDIEAGR.

An N-terminal signal peptide occupies residues 1-23 (MKVQEGLFVVAVFYLAYTQLVKG). Residues 24 to 329 (QPRKECQTRC…RKVRPEYFRW (306 aa)) lie on the Extracellular side of the membrane. N-linked (GlcNAc...) asparagine glycosylation is found at Asn57, Asn75, Asn111, Asn154, Asn217, and Asn246. The EGF-like 1 domain maps to 230-277 (GDKTCKQVEYRGVCGGNSTCFDSTGGTGYNCKCLEGFEGNPYLPNGCQ). 6 disulfide bridges follow: Cys234-Cys249, Cys243-Cys260, Cys262-Cys276, Cys282-Cys295, Cys289-Cys304, and Cys306-Cys318. An EGF-like 2; calcium-binding domain is found at 278–319 (DINECISSRHNCSEHSTCENTKGSFNCNCPSGYRKDSLNSCT). N-linked (GlcNAc...) asparagine glycosylation is present at Asn288. The helical transmembrane segment at 330–350 (TQIFLGTTIGFSVIMLGISCL) threads the bilayer. Residues 351–732 (QQKIKHRKNT…VTTLDIEAGR (382 aa)) are Cytoplasmic-facing. Thr393 carries the post-translational modification Phosphothreonine. Residues 404-677 (YHESRILGQG…KEVAAELEAL (274 aa)) enclose the Protein kinase domain. ATP contacts are provided by residues 410–418 (LGQGGQGTV) and Lys432. Tyr477 is subject to Phosphotyrosine. The active-site Proton acceptor is Asp529. Phosphothreonine is present on residues Thr563 and Thr568. Tyr576 carries the post-translational modification Phosphotyrosine.

Belongs to the protein kinase superfamily. Ser/Thr protein kinase family. In terms of tissue distribution, predominantly expressed in green tissues such as stems and leaves. Detected at organ junctions.

It localises to the membrane. It catalyses the reaction L-seryl-[protein] + ATP = O-phospho-L-seryl-[protein] + ADP + H(+). The enzyme catalyses L-threonyl-[protein] + ATP = O-phospho-L-threonyl-[protein] + ADP + H(+). Its function is as follows. Serine/threonine-protein kinase that may function as a signaling receptor of extracellular matrix component. Binding to pectin may have significance in the control of cell expansion, morphogenesis and development. The chain is Wall-associated receptor kinase 2 (WAK2) from Arabidopsis thaliana (Mouse-ear cress).